A 593-amino-acid polypeptide reads, in one-letter code: Tyrosine-protein phosphatase non-receptor type 9 (593 aa).

M1 carries the post-translational modification N-acetylmethionine. Positions M1–Q21 are disordered. The CRAL-TRIO domain occupies E84–L243. Residues I303 to F574 enclose the Tyrosine-protein phosphatase domain. Substrate is bound by residues D470, C515–R521, and Q559. C515 acts as the Phosphocysteine intermediate in catalysis.

It belongs to the protein-tyrosine phosphatase family. Non-receptor class 3 subfamily.

The protein resides in the cytoplasm. The catalysed reaction is O-phospho-L-tyrosyl-[protein] + H2O = L-tyrosyl-[protein] + phosphate. Its function is as follows. Protein-tyrosine phosphatase that could participate in the transfer of hydrophobic ligands or in functions of the Golgi apparatus. This Rattus norvegicus (Rat) protein is Tyrosine-protein phosphatase non-receptor type 9 (Ptpn9).